The sequence spans 477 residues: Chromosomal replication initiator protein DnaA (477 aa).

A domain I, interacts with DnaA modulators region spans residues 1 to 87 (MSDRSDPTHA…AGVSNFAIVV (87 aa)). Positions 87–132 (VNPEIAQDAFAQHPEPAAEQPYIETPTITAPTDNPGLPASPSRGDS) are domain II. The disordered stretch occupies residues 112–131 (PTITAPTDNPGLPASPSRGD). Residues 133–349 (RLNPKYGFDT…GTLIRVTAFA (217 aa)) form a domain III, AAA+ region region. ATP contacts are provided by Gly177, Gly179, Lys180, and Thr181. A domain IV, binds dsDNA region spans residues 350-477 (SLNKTPVDLA…IKQNHRYGKM (128 aa)).

This sequence belongs to the DnaA family. In terms of assembly, oligomerizes as a right-handed, spiral filament on DNA at oriC.

The protein resides in the cytoplasm. Functionally, plays an essential role in the initiation and regulation of chromosomal replication. ATP-DnaA binds to the origin of replication (oriC) to initiate formation of the DNA replication initiation complex once per cell cycle. Binds the DnaA box (a 9 base pair repeat at the origin) and separates the double-stranded (ds)DNA. Forms a right-handed helical filament on oriC DNA; dsDNA binds to the exterior of the filament while single-stranded (ss)DNA is stabiized in the filament's interior. The ATP-DnaA-oriC complex binds and stabilizes one strand of the AT-rich DNA unwinding element (DUE), permitting loading of DNA polymerase. After initiation quickly degrades to an ADP-DnaA complex that is not apt for DNA replication. Binds acidic phospholipids. In Clavibacter michiganensis subsp. michiganensis (strain NCPPB 382), this protein is Chromosomal replication initiator protein DnaA.